Consider the following 458-residue polypeptide: UDP-N-acetylmuramoylalanine--D-glutamate ligase (458 aa).

Residue 124–130 coordinates ATP; that stretch reads GSDGKTT.

This sequence belongs to the MurCDEF family.

The protein localises to the cytoplasm. The enzyme catalyses UDP-N-acetyl-alpha-D-muramoyl-L-alanine + D-glutamate + ATP = UDP-N-acetyl-alpha-D-muramoyl-L-alanyl-D-glutamate + ADP + phosphate + H(+). It participates in cell wall biogenesis; peptidoglycan biosynthesis. In terms of biological role, cell wall formation. Catalyzes the addition of glutamate to the nucleotide precursor UDP-N-acetylmuramoyl-L-alanine (UMA). This chain is UDP-N-acetylmuramoylalanine--D-glutamate ligase, found in Clostridium botulinum (strain Alaska E43 / Type E3).